Here is a 173-residue protein sequence, read N- to C-terminus: Alpha-crystallin A chain (173 aa).

An N-acetylmethionine modification is found at M1. Residues M1 to E63 are required for complex formation with BFSP1 and BFSP2. Deamidated glutamine; partial is present on Q6. Residue S45 is modified to Phosphoserine. Residue Q50 is modified to Deamidated glutamine; partial. One can recognise a sHSP domain in the interval L52 to S162. An N6-acetyllysine mark is found at K70 and K99. Positions 100, 102, and 107 each coordinate Zn(2+). The tract at residues K145–S173 is disordered. O-linked (GlcNAc) serine glycosylation is present at S162.

Belongs to the small heat shock protein (HSP20) family. Heteromer composed of three CRYAA and one CRYAB subunits. Zinc coordination is achieved at least by His-100, Glu-102 and His-107. His-100 and Glu-102 come from the same molecule within the oligomer, while His-107 residue is provided by another molecule. Inter-subunit bridging via zinc ions enhances stability, which is crucial as there is no protein turn over in the lens. Can also form homodimers and homotetramers (dimers of dimers) which serve as the building blocks of homooligomers. Part of a complex required for lens intermediate filament formation composed of BFSP1, BFSP2 and CRYAA. Acetylation at Lys-70 may increase chaperone activity. In terms of processing, undergoes age-dependent proteolytical cleavage at the C-terminus.

It is found in the cytoplasm. It localises to the nucleus. Contributes to the transparency and refractive index of the lens. Acts as a chaperone, preventing aggregation of various proteins under a wide range of stress conditions. Required for the correct formation of lens intermediate filaments as part of a complex composed of BFSP1, BFSP2 and CRYAA. The polypeptide is Alpha-crystallin A chain (CRYAA) (Erinaceus europaeus (Western European hedgehog)).